A 129-amino-acid polypeptide reads, in one-letter code: Virion-associated protein (129 aa).

Coiled coils occupy residues 1 to 31 (MANL…ILEL) and 38 to 59 (IKES…LIND). A capsid binding region spans residues 122–129 (PAGWPNQY).

This sequence belongs to the caulimovirus ORF III family. As to quaternary structure, homotetramer, through coiled-coil domain. Homotrimer when interacts with icosehadral capsid. Interacts with capsid protein, and with Movement protein.

It is found in the virion. Its subcellular location is the host cell junction. The protein localises to the host plasmodesma. In terms of biological role, plays a role in virus cell-to-cell and plant-to-plant transmission. Interacts with virion icosahedral capsid and movement protein, thereby facilitating virion cell-to-cell transmission through plasmodesmata opened by viral movement protein. Also interacts with aphid transmission factor, attaching the virion to aphid stylet when the animal feeds on an virus infected plant. Aphid saliva may later detach the virion, inducing release of infectious particles when the animal feeds on a new plant. The chain is Virion-associated protein from Cauliflower mosaic virus (strain D/H) (CaMV).